A 252-amino-acid chain; its full sequence is Flap endonuclease Xni (252 aa).

D105 is a Mg(2+) binding site. In terms of domain architecture, 5'-3' exonuclease spans 162–251 (EQYQFLDFIA…EINLKQFRVK (90 aa)). K(+) is bound by residues L172, A173, P181, I183, and I186. An interaction with DNA region spans residues 185-190 (GIGPKS).

The protein belongs to the Xni family. The cofactor is Mg(2+). K(+) is required as a cofactor.

Functionally, has flap endonuclease activity. During DNA replication, flap endonucleases cleave the 5'-overhanging flap structure that is generated by displacement synthesis when DNA polymerase encounters the 5'-end of a downstream Okazaki fragment. In Shewanella denitrificans (strain OS217 / ATCC BAA-1090 / DSM 15013), this protein is Flap endonuclease Xni.